Consider the following 378-residue polypeptide: Chaperone protein DnaJ (378 aa).

The 68-residue stretch at 5 to 72 folds into the J domain; that stretch reads DFYEVLGVPK…QKRAAYDQFG (68 aa). The segment at 138 to 216 adopts a CR-type zinc-finger fold; that stretch reads GKEAQIRIPS…CHGQGKVKKQ (79 aa). Positions 151, 154, 168, 171, 190, 193, 204, and 207 each coordinate Zn(2+). CXXCXGXG motif repeat units lie at residues 151-158, 168-175, 190-197, and 204-211; these read CETCHGSG, CTTCSGTG, CPHCRGTG, and CVTCHGQG. Residues 354–378 are disordered; that stretch reads SLKKGGGKHSPSGESWTDRLKNLFT. Over residues 369 to 378 the composition is skewed to basic and acidic residues; it reads WTDRLKNLFT.

Belongs to the DnaJ family. Homodimer. Zn(2+) serves as cofactor.

Its subcellular location is the cytoplasm. Participates actively in the response to hyperosmotic and heat shock by preventing the aggregation of stress-denatured proteins and by disaggregating proteins, also in an autonomous, DnaK-independent fashion. Unfolded proteins bind initially to DnaJ; upon interaction with the DnaJ-bound protein, DnaK hydrolyzes its bound ATP, resulting in the formation of a stable complex. GrpE releases ADP from DnaK; ATP binding to DnaK triggers the release of the substrate protein, thus completing the reaction cycle. Several rounds of ATP-dependent interactions between DnaJ, DnaK and GrpE are required for fully efficient folding. Also involved, together with DnaK and GrpE, in the DNA replication of plasmids through activation of initiation proteins. The polypeptide is Chaperone protein DnaJ (Paracidovorax citrulli (strain AAC00-1) (Acidovorax citrulli)).